The following is a 70-amino-acid chain: Brevinin-ALb (70 aa).

Residues 1 to 22 form the signal peptide; the sequence is MFTLKKSLLLLFFLGTINLSLC. A propeptide spanning residues 23 to 46 is cleaved from the precursor; sequence EQERDADEEERRDDDEMDVEVEKR. An intrachain disulfide couples Cys64 to Cys70.

In terms of tissue distribution, expressed by the skin glands.

The protein localises to the secreted. Its function is as follows. Antimicrobial peptide with activity against Gram-positive and Gram-negative bacteria and against fungi. Has been tested against S.aureus (MIC=5.5 ug/mL), E.coli (MIC=6.5 ug/mL), B.dysenteriae (MIC=2.2 ug/mL), and C.albicans (MIC=7.5 ug/mL). Can regulate or mediate antimicrobial response by stimulating mast cell degranulation. Induces histamine release. Shows cytotoxicity toward solid tumor cell line HepG2. Also shows a potent hemolytic activity (LD(50)=5 ug/ml). In Amolops loloensis (Lolokou Sucker Frog), this protein is Brevinin-ALb.